Reading from the N-terminus, the 96-residue chain is Teretoxin Tan6.14 (96 aa).

A signal peptide spans 1 to 21 (MRPLLVFVLMVSVSLAFSLEG). Positions 22–60 (MPNNGGDSVASITANQARRFKRNPLFSFAQHSLVDLKAR) are excised as a propeptide.

In terms of processing, contains 3 disulfide bonds. Expressed by the venom duct.

The protein localises to the secreted. The protein is Teretoxin Tan6.14 of Terebra anilis (Auger snail).